Reading from the N-terminus, the 388-residue chain is Alanine racemase (388 aa).

Lys-40 (proton acceptor; specific for D-alanine) is an active-site residue. At Lys-40 the chain carries N6-(pyridoxal phosphate)lysine. Residue Arg-137 coordinates substrate. Tyr-269 serves as the catalytic Proton acceptor; specific for L-alanine. Met-318 contributes to the substrate binding site.

The protein belongs to the alanine racemase family. Pyridoxal 5'-phosphate is required as a cofactor.

It carries out the reaction L-alanine = D-alanine. It participates in amino-acid biosynthesis; D-alanine biosynthesis; D-alanine from L-alanine: step 1/1. Functionally, catalyzes the interconversion of L-alanine and D-alanine. May also act on other amino acids. The chain is Alanine racemase (alr) from Halalkalibacterium halodurans (strain ATCC BAA-125 / DSM 18197 / FERM 7344 / JCM 9153 / C-125) (Bacillus halodurans).